We begin with the raw amino-acid sequence, 107 residues long: UPF0145 protein ETA_21660 (107 aa).

It belongs to the UPF0145 family.

This is UPF0145 protein ETA_21660 from Erwinia tasmaniensis (strain DSM 17950 / CFBP 7177 / CIP 109463 / NCPPB 4357 / Et1/99).